The chain runs to 605 residues: Glutamine--fructose-6-phosphate aminotransferase [isomerizing] (605 aa).

Cys-2 acts as the Nucleophile; for GATase activity in catalysis. The region spanning 2-220 is the Glutamine amidotransferase type-2 domain; sequence CGIVGVTGKD…DGEIVVVKPD (219 aa). SIS domains are found at residues 286–426 and 458–595; these read LLTA…VDQP and AKSA…VDKP. Lys-600 functions as the For Fru-6P isomerization activity in the catalytic mechanism.

As to quaternary structure, homodimer.

Its subcellular location is the cytoplasm. The catalysed reaction is D-fructose 6-phosphate + L-glutamine = D-glucosamine 6-phosphate + L-glutamate. Functionally, catalyzes the first step in hexosamine metabolism, converting fructose-6P into glucosamine-6P using glutamine as a nitrogen source. The sequence is that of Glutamine--fructose-6-phosphate aminotransferase [isomerizing] from Lactiplantibacillus plantarum (strain ATCC BAA-793 / NCIMB 8826 / WCFS1) (Lactobacillus plantarum).